The primary structure comprises 611 residues: Procollagen galactosyltransferase 1-A (611 aa).

The signal sequence occupies residues 1 to 24 (MSQAGVDRLLRGLQLLLLVLRLSA). N-linked (GlcNAc...) asparagine glycans are attached at residues Asn-85, Asn-173, Asn-312, Asn-370, and Asn-568. Residues 575 to 591 (WDRAKSRKTQQQEKLRS) are compositionally biased toward basic and acidic residues. The tract at residues 575–611 (WDRAKSRKTQQQEKLRSEALNSPSLGSPFDNTARDEL) is disordered. Residues 608 to 611 (RDEL) carry the Prevents secretion from ER motif.

Belongs to the glycosyltransferase 25 family.

The protein localises to the endoplasmic reticulum lumen. The enzyme catalyses (5R)-5-hydroxy-L-lysyl-[collagen] + UDP-alpha-D-galactose = (5R)-5-O-(beta-D-galactosyl)-5-hydroxy-L-lysyl-[collagen] + UDP + H(+). Beta-galactosyltransferase that transfers beta-galactose to hydroxylysine residues of type I collagen. By acting on collagen glycosylation, facilitates the formation of collagen triple helix. In Xenopus laevis (African clawed frog), this protein is Procollagen galactosyltransferase 1-A (colgalt1-a).